Here is a 445-residue protein sequence, read N- to C-terminus: MAELKYISGFGNECASEDPRCPGSLPKGQNNPQVCPYNLYAEQLSGSAFTCPRNTNKRSWLYRILPSVSHKPFESIDQGHVTHNWDEVGPDPNQLRWKPFEIPKASEKKVDFVSGLYTLCGAGDIKSNNGLAVHIFLCNSSMENRCFYNSDGDFLIVPQKGKLLIYTEFGKMSLQPNEICVIQRGMRFSVDVFEETRGYILEVYGVHFELPDLGPIGANGLANPRDFLIPVAWYEDRRVPGGYTVINKFQGKLFACKQDVSPFNVVAWHGNYTPYKYNLENFMVINAVAFDHADPSIFTVLTAKSLRPGVAIADFVIFPPRWGVADKTFRPPYYHRNCMSEFMGLIKGHYEAKQGGFLPGGGSLHSAMTPHGPDADCFEKASKAKLEPERIADGTMAFMFESSLSLAVTKWGLKTCSCLDENYYKCWEPLRSHFTPNSRSPTEPK.

Lysine 98 carries the N6-acetyllysine modification. 3 residues coordinate Fe cation: histidine 335, glutamate 341, and histidine 371. At lysine 414 the chain carries N6-succinyllysine.

Belongs to the homogentisate dioxygenase family. In terms of assembly, homohexamer arranged as a dimer of trimers. It depends on Fe cation as a cofactor.

It carries out the reaction homogentisate + O2 = 4-maleylacetoacetate + H(+). It functions in the pathway amino-acid degradation; L-phenylalanine degradation; acetoacetate and fumarate from L-phenylalanine: step 4/6. Its function is as follows. Catalyzes the conversion of homogentisate to maleylacetoacetate. This is Homogentisate 1,2-dioxygenase (Hgd) from Mus musculus (Mouse).